We begin with the raw amino-acid sequence, 614 residues long: ATP-dependent zinc metalloprotease FtsH (614 aa).

Residues 1 to 7 (MKKQWKK) are Stromal-facing. The helical transmembrane segment at 8 to 28 (IVLFVLPVIITLITLSSFLFY) threads the bilayer. Over 29–116 (NQDVVHNWSS…AHPSSSNVNL (88 aa)) the chain is Lumenal. A helical transmembrane segment spans residues 117 to 137 (VSWLSNLLLPLILIITLFFFF). Residues 138 to 614 (RRGNKSSSGP…EFMRIVEERV (477 aa)) are Stromal-facing. Position 211 to 218 (211 to 218 (GPPGTGKT)) interacts with ATP. H432 is a Zn(2+) binding site. E433 is a catalytic residue. Zn(2+) is bound by residues H436 and D510.

This sequence in the central section; belongs to the AAA ATPase family. In the C-terminal section; belongs to the peptidase M41 family. As to quaternary structure, homohexamer. Zn(2+) serves as cofactor.

It localises to the plastid. Its subcellular location is the chloroplast thylakoid membrane. Acts as a processive, ATP-dependent zinc metallopeptidase. This Cyanidium caldarium (Red alga) protein is ATP-dependent zinc metalloprotease FtsH.